The chain runs to 147 residues: D-aminoacyl-tRNA deacylase (147 aa).

Residues 137–138 carry the Gly-cisPro motif, important for rejection of L-amino acids motif; the sequence is GP.

This sequence belongs to the DTD family. As to quaternary structure, homodimer.

Its subcellular location is the cytoplasm. It carries out the reaction glycyl-tRNA(Ala) + H2O = tRNA(Ala) + glycine + H(+). It catalyses the reaction a D-aminoacyl-tRNA + H2O = a tRNA + a D-alpha-amino acid + H(+). An aminoacyl-tRNA editing enzyme that deacylates mischarged D-aminoacyl-tRNAs. Also deacylates mischarged glycyl-tRNA(Ala), protecting cells against glycine mischarging by AlaRS. Acts via tRNA-based rather than protein-based catalysis; rejects L-amino acids rather than detecting D-amino acids in the active site. By recycling D-aminoacyl-tRNA to D-amino acids and free tRNA molecules, this enzyme counteracts the toxicity associated with the formation of D-aminoacyl-tRNA entities in vivo and helps enforce protein L-homochirality. The sequence is that of D-aminoacyl-tRNA deacylase from Acinetobacter baumannii (strain ATCC 17978 / DSM 105126 / CIP 53.77 / LMG 1025 / NCDC KC755 / 5377).